Here is a 182-residue protein sequence, read N- to C-terminus: Large ribosomal subunit protein uL16 (182 aa).

This sequence belongs to the universal ribosomal protein uL16 family.

The protein is Large ribosomal subunit protein uL16 of Thermococcus gammatolerans (strain DSM 15229 / JCM 11827 / EJ3).